Consider the following 343-residue polypeptide: Transcription factor MYB83 (343 aa).

Residues 1-16 (MMMRKPDITTIRDKGK) show a composition bias toward basic and acidic residues. Residues 1-33 (MMMRKPDITTIRDKGKPNHACGGNNNKPKLRKG) form a disordered region. HTH myb-type domains follow at residues 27–79 (KPKL…INYL) and 80–134 (RPDL…KKRL). DNA-binding regions (H-T-H motif) lie at residues 55–79 (WSDIARNAGLLRCGKSCRLRWINYL) and 107–130 (WSQIATRLPGRTDNEIKNFWNSTL). The disordered stretch occupies residues 134–172 (LKNNSNNNTSSGSSPNNSNSNSLDPRDQHVDMGGNSTSL). Residues 136–155 (NNSNNNTSSGSSPNNSNSNS) show a composition bias toward low complexity.

As to expression, expressed specifically in fiber and vessel cells that are undergoing secondary wall thickening in floral stems. Expressed in vessels but not in xylary fibers in the developing secondary xylem of roots.

Its subcellular location is the nucleus. In terms of biological role, transcription factor that acts as a molecular switch in the NAC012/SND1-mediated transcriptional network regulating secondary wall biosynthesis. Is directly activated by NAC012/SND1 and its close homologs, including NAC043/NST1, NAC066/NST2, NAC101/VND6 and NAC030/VND7. Is required for functional expression of a number of secondary wall-associated transcription factors and secondary wall biosynthetic genes involved in cellulose, xylan and lignin synthesis. Functions redundantly with MYB46 in the transcriptional regulatory cascade leading to secondary wall formation in fibers and vessels. Transcription activator that binds to the DNA consensus sequence 5'-ACC[AT]A[AC][TC]-3', designated as the secondary wall MYB-responsive element (SMRE). Regulates directly numerous transcription factors and a number of genes involved in secondary wall biosynthesis that contain SMRE elements in their promoters. In Arabidopsis thaliana (Mouse-ear cress), this protein is Transcription factor MYB83.